A 255-amino-acid chain; its full sequence is Imidazole glycerol phosphate synthase subunit HisF (255 aa).

Residues aspartate 11 and aspartate 130 contribute to the active site.

It belongs to the HisA/HisF family. In terms of assembly, heterodimer of HisH and HisF.

It is found in the cytoplasm. The enzyme catalyses 5-[(5-phospho-1-deoxy-D-ribulos-1-ylimino)methylamino]-1-(5-phospho-beta-D-ribosyl)imidazole-4-carboxamide + L-glutamine = D-erythro-1-(imidazol-4-yl)glycerol 3-phosphate + 5-amino-1-(5-phospho-beta-D-ribosyl)imidazole-4-carboxamide + L-glutamate + H(+). It functions in the pathway amino-acid biosynthesis; L-histidine biosynthesis; L-histidine from 5-phospho-alpha-D-ribose 1-diphosphate: step 5/9. In terms of biological role, IGPS catalyzes the conversion of PRFAR and glutamine to IGP, AICAR and glutamate. The HisF subunit catalyzes the cyclization activity that produces IGP and AICAR from PRFAR using the ammonia provided by the HisH subunit. In Syntrophotalea carbinolica (strain DSM 2380 / NBRC 103641 / GraBd1) (Pelobacter carbinolicus), this protein is Imidazole glycerol phosphate synthase subunit HisF.